A 120-amino-acid polypeptide reads, in one-letter code: Chaperonin GroEL (120 aa).

23–27 (DGTTT) contributes to the ATP binding site.

It belongs to the chaperonin (HSP60) family. As to quaternary structure, forms a cylinder of 14 subunits composed of two heptameric rings stacked back-to-back. Interacts with the co-chaperonin GroES.

It localises to the cytoplasm. The catalysed reaction is ATP + H2O + a folded polypeptide = ADP + phosphate + an unfolded polypeptide.. Together with its co-chaperonin GroES, plays an essential role in assisting protein folding. The GroEL-GroES system forms a nano-cage that allows encapsulation of the non-native substrate proteins and provides a physical environment optimized to promote and accelerate protein folding. This chain is Chaperonin GroEL, found in Mycolicibacterium fallax (Mycobacterium fallax).